We begin with the raw amino-acid sequence, 668 residues long: DNA ligase (668 aa).

NAD(+) is bound by residues 34 to 38, 83 to 84, and E114; these read DTEYD and SL. The N6-AMP-lysine intermediate role is filled by K116. Residues R137, E171, K286, and K310 each contribute to the NAD(+) site. Residues C404, C407, C422, and C427 each coordinate Zn(2+). Residues 588-668 form the BRCT domain; the sequence is NSDSIIANKT…FFDLLKSEKG (81 aa).

This sequence belongs to the NAD-dependent DNA ligase family. LigA subfamily. The cofactor is Mg(2+). Mn(2+) is required as a cofactor.

It catalyses the reaction NAD(+) + (deoxyribonucleotide)n-3'-hydroxyl + 5'-phospho-(deoxyribonucleotide)m = (deoxyribonucleotide)n+m + AMP + beta-nicotinamide D-nucleotide.. Functionally, DNA ligase that catalyzes the formation of phosphodiester linkages between 5'-phosphoryl and 3'-hydroxyl groups in double-stranded DNA using NAD as a coenzyme and as the energy source for the reaction. It is essential for DNA replication and repair of damaged DNA. The sequence is that of DNA ligase from Mycoplasma capricolum subsp. capricolum (strain California kid / ATCC 27343 / NCTC 10154).